We begin with the raw amino-acid sequence, 290 residues long: Endoplasmic reticulum-Golgi intermediate compartment protein 1 (290 aa).

Topologically, residues 1–27 are cytoplasmic; the sequence is MSFDVRRFDIYRKVPKDLTQPTYTGAF. A helical membrane pass occupies residues 28-48; that stretch reads ISICCCVFMLFLFLSELTGFI. Topologically, residues 49–254 are lumenal; that stretch reads ATEIVNELYV…RRRPFYRFIT (206 aa). N-linked (GlcNAc...) asparagine glycosylation is present at Asn-74. The helical transmembrane segment at 255–275 threads the bilayer; the sequence is TICAIIGGTFTVAGIIDSCIF. Topologically, residues 276 to 290 are cytoplasmic; that stretch reads TASEAWKKIQIGKMS.

This sequence belongs to the ERGIC family.

It localises to the endoplasmic reticulum membrane. It is found in the endoplasmic reticulum-Golgi intermediate compartment membrane. The protein localises to the golgi apparatus membrane. Possible role in transport between endoplasmic reticulum and Golgi. The sequence is that of Endoplasmic reticulum-Golgi intermediate compartment protein 1 (ergic1) from Danio rerio (Zebrafish).